The following is a 486-amino-acid chain: NADH-quinone oxidoreductase subunit N (486 aa).

The next 13 membrane-spanning stretches (helical) occupy residues 5-25 (IGLS…ASLL), 41-61 (LITL…LVVF), 77-97 (GVTQ…MVMM), 118-138 (SAVG…FIGL), 165-185 (YFIL…FIFG), 209-229 (FLFG…IAPF), 245-265 (TAFM…RIIA), 275-295 (LFDI…AAAI), 304-324 (IAYS…TAGV), 335-355 (VIFY…IAAM), 380-400 (ALCL…LGFF), 413-433 (GLLW…YYYL), and 458-478 (VTAV…GPIF).

This sequence belongs to the complex I subunit 2 family. In terms of assembly, NDH-1 is composed of 14 different subunits. Subunits NuoA, H, J, K, L, M, N constitute the membrane sector of the complex.

Its subcellular location is the cell inner membrane. The catalysed reaction is a quinone + NADH + 5 H(+)(in) = a quinol + NAD(+) + 4 H(+)(out). In terms of biological role, NDH-1 shuttles electrons from NADH, via FMN and iron-sulfur (Fe-S) centers, to quinones in the respiratory chain. The immediate electron acceptor for the enzyme in this species is believed to be ubiquinone. Couples the redox reaction to proton translocation (for every two electrons transferred, four hydrogen ions are translocated across the cytoplasmic membrane), and thus conserves the redox energy in a proton gradient. The chain is NADH-quinone oxidoreductase subunit N from Bdellovibrio bacteriovorus (strain ATCC 15356 / DSM 50701 / NCIMB 9529 / HD100).